Reading from the N-terminus, the 145-residue chain is Aminoglycoside N(6')-acetyltransferase type 1 (145 aa).

One can recognise an N-acetyltransferase domain in the interval 1–145 (MDIRQMNKTH…ERVIFYRKRC (145 aa)). Tryptophan 22, histidine 25, tyrosine 66, and glutamate 79 together coordinate substrate. Residues 81 to 83 (IFV) and 89 to 94 (QRGVAK) contribute to the acetyl-CoA site. Position 115 (aspartate 115) interacts with substrate. Asparagine 120 provides a ligand contact to acetyl-CoA. Glutamate 136 lines the substrate pocket.

Homodimer.

The catalysed reaction is kanamycin B + acetyl-CoA = N(6')-acetylkanamycin B + CoA + H(+). Functionally, catalyzes the transfer of an acetyl group from acetyl-CoA to the 6'-amino group of aminoglycoside molecules conferring resistance to antibiotics containing the purpurosamine ring including amikacin, tobramycin, dibekacin and ribostamycin. Able to acetylate eukaryotic histone proteins. The protein is Aminoglycoside N(6')-acetyltransferase type 1 of Salmonella enteritidis.